The following is a 1027-amino-acid chain: Kinesin heavy chain isoform 5A (1027 aa).

Ala-2 carries the N-acetylalanine modification. The 319-residue stretch at 9–327 (SIKVLCRFRP…LMFGQRAKTI (319 aa)) folds into the Kinesin motor domain. 86–93 (GQTSSGKT) contributes to the ATP binding site. Residues 174-315 (VSSPEEILDV…PSSYNDAETK (142 aa)) form a microtubule-binding region. The tract at residues 271-361 (EGTKSYVPYR…KTKAQKETIA (91 aa)) is necessary for interaction with ZFYVE27. Residues 331–906 (ASVNLELTAE…VDRIKEAVRY (576 aa)) adopt a coiled-coil conformation. Residues 353–1027 (TKAQKETIAK…FPLHQETAAS (675 aa)) are interaction with BICD2. Thr-397 is modified (phosphothreonine). Positions 906–937 (YKSSGKRGHSAQIAKPVRPGHYPASSPTNPYG) are disordered. Residues 907-1027 (KSSGKRGHSA…FPLHQETAAS (121 aa)) are globular.

It belongs to the TRAFAC class myosin-kinesin ATPase superfamily. Kinesin family. Kinesin subfamily. In terms of assembly, oligomer composed of two heavy chains and two light chains. Interacts with GRIP1. Interacts with FMR1 (via C-terminus); this interaction is increased in a mGluR-dependent manner. Interacts with BORCS5. Interacts with ZFYVE27. Interacts with VAPA, VAPB, SURF4, RAB11A (GDP-bound form), RAB11B (GDP-bound form) and RTN3 in a ZFYVE27-dependent manner. Interacts with BICD2. Interacts with DTNB.

It is found in the cytoplasm. Its subcellular location is the perinuclear region. It localises to the cytoskeleton. The protein localises to the perikaryon. The catalysed reaction is ATP + H2O + a kinesin associated with a microtubule at position (n) = ADP + phosphate a kinesin associated with a microtubule at position (n+1, toward the plus end).. In terms of biological role, microtubule-dependent motor required for slow axonal transport of neurofilament proteins (NFH, NFM and NFL). Can induce formation of neurite-like membrane protrusions in non-neuronal cells in a ZFYVE27-dependent manner. The ZFYVE27-KIF5A complex contributes to the vesicular transport of VAPA, VAPB, SURF4, RAB11A, RAB11B and RTN3 proteins in neurons. Required for anterograde axonal transportation of MAPK8IP3/JIP3 which is essential for MAPK8IP3/JIP3 function in axon elongation. The protein is Kinesin heavy chain isoform 5A (Kif5a) of Mus musculus (Mouse).